Consider the following 205-residue polypeptide: Shieldin complex subunit 1 (205 aa).

As to quaternary structure, component of the shieldin complex, consisting of SHLD1, SHLD2, SHLD3 and MAD2L2/REV7. Within the complex, SHLD2 forms a scaffold which interacts with a SHLD3-MAD2L2 subcomplex via its N-terminus, and with SHLD1 via its C-terminus. Interacts with ASTE1.

Its subcellular location is the chromosome. Its function is as follows. Component of the shieldin complex, which plays an important role in repair of DNA double-stranded breaks (DSBs). During G1 and S phase of the cell cycle, the complex functions downstream of TP53BP1 to promote non-homologous end joining (NHEJ) and suppress DNA end resection. Mediates various NHEJ-dependent processes including immunoglobulin class-switch recombination, and fusion of unprotected telomeres. The sequence is that of Shieldin complex subunit 1 from Homo sapiens (Human).